Reading from the N-terminus, the 213-residue chain is Histone H1.2 (213 aa).

Positions 1-17 (MSETAPAAPAAAPPAEK) are enriched in low complexity. Residues 1 to 41 (MSETAPAAPAAAPPAEKAPVKKKAAKKAGGTPRKASGPPVS) are disordered. N-acetylserine; partial is present on S2. S2 carries the phosphoserine modification. An N6-acetyllysine modification is found at K17. N6-(2-hydroxyisobutyryl)lysine occurs at positions 23, 26, and 27. At K34 the chain carries N6-(beta-hydroxybutyryl)lysine; alternate. K34 is subject to N6-crotonyllysine; alternate. N6-methyllysine; alternate is present on K34. The region spanning 36-109 (SGPPVSELIT…GASGSFKLNK (74 aa)) is the H15 domain. N6-(2-hydroxyisobutyryl)lysine is present on K46. At K52 the chain carries N6-(beta-hydroxybutyryl)lysine; alternate. K52 is subject to N6-(2-hydroxyisobutyryl)lysine; alternate. At R54 the chain carries Citrulline. K63 carries the N6-(2-hydroxyisobutyryl)lysine modification. K64 is modified (N6-(beta-hydroxybutyryl)lysine; alternate). K64 is subject to N6-crotonyllysine; alternate. The residue at position 64 (K64) is an N6-(2-hydroxyisobutyryl)lysine; alternate. An N6-(2-hydroxyisobutyryl)lysine mark is found at K75 and K81. N6-(beta-hydroxybutyryl)lysine; alternate is present on residues K85 and K90. N6-crotonyllysine; alternate occurs at positions 85, 90, and 97. N6-(2-hydroxyisobutyryl)lysine; alternate is present on residues K85, K90, and K97. A disordered region spans residues 92-213 (TLVQTKGTGA…KPKKAAPKKK (122 aa)). K97 is subject to N6-succinyllysine; alternate. At S104 the chain carries Phosphoserine; by PKC. K106 carries the post-translational modification N6-(beta-hydroxybutyryl)lysine. N6-(2-hydroxyisobutyryl)lysine is present on residues K110, K117, K121, K129, and K136. Positions 119–140 (KVKKAGGTKPKKPVGAAKKPKK) are enriched in basic residues. T146 is subject to Phosphothreonine. An N6-(2-hydroxyisobutyryl)lysine modification is found at K148. Basic residues predominate over residues 149-160 (KSAKKTPKKAKK). An N6-crotonyllysine; alternate mark is found at K159 and K168. N6-(2-hydroxyisobutyryl)lysine; alternate occurs at positions 159 and 168. The span at 169 to 186 (KVAKSPKKAKVAKPKKAA) shows a compositional bias: basic residues. K187 is subject to N6-methyllysine; by EHMT1 and EHMT2. At S188 the chain carries ADP-ribosylserine. Positions 193–213 (VKPKAAKPKVVKPKKAAPKKK) are enriched in basic residues. Position 213 is an N6-(2-hydroxyisobutyryl)lysine (K213).

This sequence belongs to the histone H1/H5 family. Interacts with TSC22D1 isoforms 2 and 5. H1 histones are progressively phosphorylated during the cell cycle, becoming maximally phosphorylated during late G2 phase and M phase, and being dephosphorylated sharply thereafter. Post-translationally, crotonylation (Kcr) is specifically present in male germ cells and marks testis-specific genes in post-meiotic cells, including X-linked genes that escape sex chromosome inactivation in haploid cells. Crotonylation marks active promoters and enhancers and confers resistance to transcriptional repressors. It is also associated with post-meiotically activated genes on autosomes. In terms of processing, citrullination at Arg-54 (H1R54ci) by PADI4 takes place within the DNA-binding site of H1 and results in its displacement from chromatin and global chromatin decondensation, thereby promoting pluripotency and stem cell maintenance. ADP-ribosylated on Ser-188 in response to DNA damage.

It is found in the nucleus. The protein resides in the chromosome. In terms of biological role, histone H1 protein binds to linker DNA between nucleosomes forming the macromolecular structure known as the chromatin fiber. Histones H1 are necessary for the condensation of nucleosome chains into higher-order structured fibers. Also acts as a regulator of individual gene transcription through chromatin remodeling, nucleosome spacing and DNA methylation. The protein is Histone H1.2 of Homo sapiens (Human).